A 307-amino-acid chain; its full sequence is Golgi to ER traffic protein 2 (307 aa).

Topologically, residues 1–173 (MSDSTDSPAV…QAYDTYQQKL (173 aa)) are cytoplasmic. Over residues 41–52 (LSQGSSVKTTGV) the composition is skewed to polar residues. The segment at 41 to 73 (LSQGSSVKTTGVKSVLDEPQPTATSSAIHDEDP) is disordered. A helical transmembrane segment spans residues 174–194 (WKSRFLVIRVVVTLFNFFYHY). Residues 195 to 220 (LNVPSFHASNYSYVRDLAQDEFPVRN) lie on the Lumenal side of the membrane. A helical transmembrane segment spans residues 221–240 (FFTWFAAFEVIIVLQYYTVF). The Cytoplasmic segment spans residues 241-284 (HKLGLFHAANQNSMIMKLMSMGSMVLPQLNTYQPLVARFLGYYE). Residues 285–305 (LFGIIFGDLSLVIVLFGLLSF) traverse the membrane as a helical segment. Over 306–307 (TK) the chain is Lumenal.

The protein belongs to the GET2 family. Component of the Golgi to ER traffic (GET) complex, which is composed of GET1, GET2 and GET3. Within the complex, GET1 and GET2 form a heterotetramer which is stabilized by phosphatidylinositol binding and which binds to the GET3 homodimer.

It localises to the endoplasmic reticulum membrane. It is found in the golgi apparatus membrane. Its function is as follows. Required for the post-translational delivery of tail-anchored (TA) proteins to the endoplasmic reticulum. Together with GET1, acts as a membrane receptor for soluble GET3, which recognizes and selectively binds the transmembrane domain of TA proteins in the cytosol. The GET complex cooperates with the HDEL receptor ERD2 to mediate the ATP-dependent retrieval of resident ER proteins that contain a C-terminal H-D-E-L retention signal from the Golgi to the ER. The polypeptide is Golgi to ER traffic protein 2 (Candida tropicalis (strain ATCC MYA-3404 / T1) (Yeast)).